The chain runs to 359 residues: Peptide chain release factor 1 (359 aa).

Position 235 is an N5-methylglutamine (glutamine 235).

Belongs to the prokaryotic/mitochondrial release factor family. In terms of processing, methylated by PrmC. Methylation increases the termination efficiency of RF1.

The protein resides in the cytoplasm. Functionally, peptide chain release factor 1 directs the termination of translation in response to the peptide chain termination codons UAG and UAA. This Chelativorans sp. (strain BNC1) protein is Peptide chain release factor 1.